The sequence spans 1158 residues: MSLDLLSRLKKYIHDEENSDLDSIYAECENAGLTAVVNDVIDTLLLGTSSCFDEDCLEKLFAICSHFADLSSSVRNKVYDLLTSNISSESAILEDMISANATDFTVPQTNLETTGIAFQLTVNSLSSSNQLSVIRSSTNTVKGRKKNPTTNSNWNGISHVNALLDAIITLFQKKLSRVWTTSSERDMFLSLFLKPIYTLMESEINIKNASFRSRLFNIIGLAVQFHNHTTAAETNIIQNLQYFEHLSEYAADLVHIVTVQFNSVTLAEGIIRTLCSLEFNDNDVKGPKQVALFLVRLSSLIPNLCLKQLTQLVKLLDSESYTLRCAIIEVLANVVIDQIHDEAQNEMSESVPATVQSLMDLLSERLLDISPYCRTKVLHVFIKIFDLPIKYPRKRQEIAELVIRCLQDRSSHVRRNAIKLFSKLLTTHPFSVMHNGLLTRNIWEKGLSIIEEQLNSLQPKQQEKVVDSELEVDENLLEDATMIQDDESHEGESHLENSLSEYVDSVPAEEIVKVNLTKRFYLEALQYIDIVEAGAKIISQLLFAKNKSEVIESMDFFVFCNSFGISSSKLYIKKMIHLIWVKGTSDEGNNIQNHVLSCYKTLFFEPPPNSGTNEAANYIARNLISLTYDASLAELTSLEQMLCILMKDGYFSHLVITKLWQVYSYQKKDISRTQRRGSIIVIGMLALGNTDVVMQGLDHLIQIGLGPPGLEDLVLARYTCIAIKRIGKDASGSSNINFPNSHTLCQKLCMLLLRPSFSEEWFGLEEQAIEAIYAVAKHPDELCTNIILLLTKQLFKPSNHENTTSNDDHAMDEDLDDSPEEETLKDEEEIGIRLAHLIFLVGHVAIKQLVYIEYCEAEFKRRKADAERLAVQNSNNPINGQETSEYDLITGTSEDDFSEAMTFIRERELLYGENSLLSRFAPLVVELCSNHKSHNNQSLLLAASLTLSKFMCLSNNFCMEHLPLLITILEKCDNPIIRNNLVIGLADLTVCFNHFIDEISEYLYRRLMDEESSVKKTCFMTLAFLILAGQIKVKGQLGIMARSLEDEDARISDLARMFFTDFAAKDNSVYNNFIDIFSVLSRSAEEQDEDDAKFKRIIRFLTSFIEKERHTKQLAERLAARLDRCKTQRQWDHVVYALSLLPHKADNIQKLIDDGYHE.

The interval 800–826 is disordered; it reads HENTTSNDDHAMDEDLDDSPEEETLKD. The span at 810-826 shows a compositional bias: acidic residues; the sequence is AMDEDLDDSPEEETLKD.

Belongs to the CND1 (condensin subunit 1) family. As to quaternary structure, component of the condensin complex, which contains the cut14/smc2 and cut3/smc2 heterodimer, and three non SMC subunits that probably regulate the complex: cnd1, cnd2 and cnd3.

Its subcellular location is the nucleus. The protein localises to the cytoplasm. It localises to the chromosome. In terms of biological role, regulatory subunit of the condensin complex, a complex required for conversion of interphase chromatin into mitotic-like condense chromosomes. The condensin complex probably introduces positive supercoils into relaxed DNA in the presence of type I topoisomerases and converts nicked DNA into positive knotted forms in the presence of type II topoisomerases. The condensin complex probably also plays a role during interphase. This Schizosaccharomyces pombe (strain 972 / ATCC 24843) (Fission yeast) protein is Condensin complex subunit 1 (cnd1).